The chain runs to 423 residues: Mannose-6-phosphate isomerase (423 aa).

Ala2 bears the N-acetylalanine mark. Residues Ser102 and Ser108 each carry the phosphoserine modification. Positions 110, 112, 137, and 276 each coordinate Zn(2+). The active site involves Arg295.

This sequence belongs to the mannose-6-phosphate isomerase type 1 family. Zn(2+) serves as cofactor. Expressed in all tissues, but more abundant in testis.

Its subcellular location is the cytoplasm. It catalyses the reaction D-mannose 6-phosphate = D-fructose 6-phosphate. It functions in the pathway nucleotide-sugar biosynthesis; GDP-alpha-D-mannose biosynthesis; alpha-D-mannose 1-phosphate from D-fructose 6-phosphate: step 1/2. Its function is as follows. Isomerase that catalyzes the interconversion of fructose-6-P and mannose-6-P and has a critical role in the supply of D-mannose derivatives required for many eukaryotic glycosylation reactions. This is Mannose-6-phosphate isomerase from Mus musculus (Mouse).